A 249-amino-acid polypeptide reads, in one-letter code: Gamma-glutamyl peptidase 3 (249 aa).

The region spanning 19–217 (SEFVKKTYGG…VDRVLNMKLM (199 aa)) is the Glutamine amidotransferase type-1 domain. The Nucleophile role is filled by Cys-103. Residues His-196 and Glu-198 contribute to the active site.

The protein belongs to the peptidase C26 family.

The protein localises to the cytoplasm. Its subcellular location is the cytosol. The enzyme catalyses an S-[(1E)-1-(hydroxyimino)-omega-(methylsulfanyl)alkyl]-L-glutathione + H2O = an S-[(1E)-1-(hydroxyimino)-omega-(methylsulfanyl)alkyl]-L-cysteinylglycine + L-glutamate. It catalyses the reaction (E)-1-(glutathione-S-yl)-2-(1H-indol-3-yl)acetohydroximate + H2O = (E)-1-(glycyl-L-cystein-S-yl)-2-(1H-indol-3-yl)acetohydroximate + L-glutamate. The catalysed reaction is 2-(glutathion-S-yl)-2-(1H-indol-3-yl)acetonitrile + H2O = 2-(glycyl-L-cystein-S-yl)-2-(1H-indol-3-yl)acetonitrile + L-glutamate. It carries out the reaction (Z)-1-(glutathione-S-yl)-2-phenylacetohydroximate + H2O = (Z)-1-(glycyl-L-cystein-S-yl)-2-phenylacetohydroximate + L-glutamate. Its pathway is secondary metabolite biosynthesis. In terms of biological role, involved in glucosinolate biosynthesis. Hydrolyzes the gamma-glutamyl peptide bond of several glutathione (GSH) conjugates to produce Cys-Gly conjugates related to glucosinolates. The gamma-Glu-Cys-Gly-GSH conjugates are the sulfur-donating molecule in glucosinolate biosynthesis. Can use the GSH conjugate of the camalexin intermediate IAN (GS-IAN) as substrate. Required for the biosynthesis of camalexin, a pathogen-inducible phytoalexin with antibacterial and antifungal properties. The chain is Gamma-glutamyl peptidase 3 from Arabidopsis thaliana (Mouse-ear cress).